The chain runs to 222 residues: Capsular polysaccharide type 8 biosynthesis protein cap8A (222 aa).

Helical transmembrane passes span 20 to 40 (ILII…FFVL) and 172 to 192 (VVNL…YIFF).

The protein belongs to the CpsC/CapA family.

It localises to the cell membrane. Its function is as follows. Required for the biosynthesis of type 8 capsular polysaccharide (Cap8/CP8). Might act as the chain-length regulator. This chain is Capsular polysaccharide type 8 biosynthesis protein cap8A (cap8A), found in Staphylococcus aureus.